Here is a 591-residue protein sequence, read N- to C-terminus: Protein CBFA2T3 (591 aa).

Residues 1-105 (MPGGTPRLEG…SSSASLSTHQ (105 aa)) form a disordered region. Positions 1–381 (MPGGTPRLEG…ADREELNHWI (381 aa)) are mediates localization to the nucleus. Positions 41 to 52 (STPPNMPPPPPA) are enriched in pro residues. Residues 55 to 105 (QGATRHPSFTPSTMMNGSSHSPTAINGAPSTPNGFSNGPATSSSASLSTHQ) are compositionally biased toward polar residues. In terms of domain architecture, TAFH spans 112–207 (ARQLSKLKRF…SPAQYLAQHE (96 aa)). 2 disordered regions span residues 226-291 (LEVS…PPQH) and 386-420 (DAED…DFAP). Positions 230–256 (ESGKRRTPDRTKENGLDRDPLHPEHLS) are enriched in basic and acidic residues. Positions 263–274 (SPAQRYSPSNGL) are enriched in polar residues. The span at 279-290 (NGLPHPPGPPPQ) shows a compositional bias: pro residues. Residues 394–410 (SPPSARPHNSSSSSEAP) are compositionally biased toward low complexity. Residues 433–488 (RKAEEAVNEVKRQAMSELQKAVSDAERKAHELITTERAKMERALAEAKRQASEDAL) are a coiled coil. Zn(2+) is bound by residues C501, C504, C512, C515, C521, C525, H533, and C537. The MYND-type zinc finger occupies 501–537 (CWNCGRKASETCSGCNTARYCGSFCQHKDWEKHHHVC). Positions 548–591 (SVPTAVGQPEAVPPMASSPSDAGSAGASRAGTPGTPAPLESASR) are disordered. The segment covering 560-585 (PPMASSPSDAGSAGASRAGTPGTPAP) has biased composition (low complexity).

The protein belongs to the CBFA2T family.

The protein localises to the nucleus. It is found in the nucleolus. Its subcellular location is the nucleoplasm. It localises to the golgi apparatus. Its function is as follows. Functions as a transcriptional repressor. Regulates the proliferation and the differentiation of erythroid progenitors. Plays a role in granulocyte differentiation. May also function as an A-kinase-anchoring protein. The chain is Protein CBFA2T3 (CBFA2T3) from Gallus gallus (Chicken).